Reading from the N-terminus, the 91-residue chain is MKMYNIPTPTMAQVIMVDDPITTTEFVISALRDFFDKSLEEAKALTSSIHRDGEGVCGVYPYDIARHRAAWVRDKAKALEFPLKLLVEEIK.

Belongs to the ClpS family. As to quaternary structure, binds to the N-terminal domain of the chaperone ClpA.

In terms of biological role, involved in the modulation of the specificity of the ClpAP-mediated ATP-dependent protein degradation. In Helicobacter pylori (strain ATCC 700392 / 26695) (Campylobacter pylori), this protein is ATP-dependent Clp protease adapter protein ClpS.